A 115-amino-acid chain; its full sequence is Class I hydrophobin 21 (115 aa).

A signal peptide spans 1 to 20 (MFAAPATMLVLAALAALSSA). Disulfide bonds link C30–C93, C37–C87, C38–C77, and C94–C107.

It belongs to the fungal hydrophobin family. Self-assembles to form functional amyloid fibrils called rodlets. Self-assembly into fibrillar rodlets occurs spontaneously at hydrophobic:hydrophilic interfaces and the rodlets further associate laterally to form amphipathic monolayers.

Its subcellular location is the secreted. It is found in the cell wall. In terms of biological role, aerial growth, conidiation, and dispersal of filamentous fungi in the environment rely upon a capability of their secreting small amphipathic proteins called hydrophobins (HPBs) with low sequence identity. Class I can self-assemble into an outermost layer of rodlet bundles on aerial cell surfaces, conferring cellular hydrophobicity that supports fungal growth, development and dispersal; whereas Class II form highly ordered films at water-air interfaces through intermolecular interactions but contribute nothing to the rodlet structure. The polypeptide is Class I hydrophobin 21 (Pleurotus ostreatus (strain PC15) (Oyster mushroom)).